Consider the following 712-residue polypeptide: MATSSVSKGCFVFKPNFKKRKISVPIEDYFNKGKNASEDSKLRFETYQLIWQQMKSETERLQEELNKNLFDSLVEFLQTSHSGLWKNSKDWSCEIKLREIPTAALVLGVNVTDHDLTLRSLTEVLQNNVTPYVVSLQAKDCPDMKHFLQKLVSQLMDCKVDVQSKEKESVQVIQKNVHYSMDSLSAWYMSVTQKTDPKMPRKKRTSSSQWQSPPVVLILKDMESFTTKVLQDFIIISSQHLHEFPLILIFGIATSPVVIHRLLPHAVSSLLCIELFQSLSCKEHLTTVLDKLLLTTQFPFKLSEKVLQILTNIFLYHDFSIQNFIKGLQLSLLEHFYSQPLSVLCCNLPEAKRRIRFLSANQCENIRRLPSFRRYVEKQSSEKQVALLTSDKFLKEETQSLLENLHVYHKNYFLVLRCLHQFTSSLPKYPLGRQIRELYCMCLEKSIWDSEEYASVLQLLRLLAKDELMAMLQNCFKLFQSSSGKELGNTAKRIEEFLAQFQSLDETKEEEDTSQSQSKGLQKTDLYHLQKSLLEMKELRSTSKRQTKFEVLREQVVSFVDSLVREYLLPPDTQPLHETLYFSSAHTLRQHLNAAPRIALHTALNNPYYYLKNEALRSEEGCIPNVAPDICIAYKLHLECSRLINLVDWSEAFATVVTAAEKMDANSVTSGERNEIIHARFIRAVSELELLGFIKPTKQKTDHVARLTWGGC.

Residues serine 23 and serine 516 each carry the phosphoserine modification.

This sequence belongs to the ORC3 family. In terms of assembly, component of ORC, a complex composed of at least 6 subunits: ORC1, ORC2, ORC3, ORC4, ORC5 and ORC6. ORC is regulated in a cell-cycle dependent manner. It is sequentially assembled at the exit from anaphase of mitosis and disassembled as cells enter S phase. In terms of processing, multi-mono-ubiquitinated by OBI1; ubiquitination is important for efficient DNA replication origin site activation. Ubiquitination levels are low in mitotic and early G1-phAse cells and are induced in late G1-/early S-phase, peaking in S-phase and decrease toward the end of the cell cycle.

The protein localises to the nucleus. It is found in the chromosome. In terms of biological role, component of the origin recognition complex (ORC) that binds origins of replication. DNA-binding is ATP-dependent. The specific DNA sequences that define origins of replication have not been identified yet. ORC is required to assemble the pre-replication complex necessary to initiate DNA replication. Binds histone H3 and H4 trimethylation marks H3K9me3, H3K27me3 and H4K20me3. The protein is Origin recognition complex subunit 3 (ORC3) of Bos taurus (Bovine).